A 466-amino-acid chain; its full sequence is Asparagine--tRNA ligase (466 aa).

This sequence belongs to the class-II aminoacyl-tRNA synthetase family. In terms of assembly, homodimer.

The protein resides in the cytoplasm. The enzyme catalyses tRNA(Asn) + L-asparagine + ATP = L-asparaginyl-tRNA(Asn) + AMP + diphosphate + H(+). In Shigella dysenteriae serotype 1 (strain Sd197), this protein is Asparagine--tRNA ligase.